The primary structure comprises 695 residues: DNA ligase (695 aa).

NAD(+) contacts are provided by residues 44–48 (DAEYD), 93–94 (SL), and Glu-124. Catalysis depends on Lys-126, which acts as the N6-AMP-lysine intermediate. NAD(+) contacts are provided by Arg-147, Glu-187, Lys-304, and Lys-328. Cys-422, Cys-425, Cys-440, and Cys-445 together coordinate Zn(2+). The BRCT domain maps to 606–695 (TVQGPLAGKT…GIEVEAAARS (90 aa)).

This sequence belongs to the NAD-dependent DNA ligase family. LigA subfamily. Requires Mg(2+) as cofactor. Mn(2+) serves as cofactor.

The catalysed reaction is NAD(+) + (deoxyribonucleotide)n-3'-hydroxyl + 5'-phospho-(deoxyribonucleotide)m = (deoxyribonucleotide)n+m + AMP + beta-nicotinamide D-nucleotide.. Its function is as follows. DNA ligase that catalyzes the formation of phosphodiester linkages between 5'-phosphoryl and 3'-hydroxyl groups in double-stranded DNA using NAD as a coenzyme and as the energy source for the reaction. It is essential for DNA replication and repair of damaged DNA. The sequence is that of DNA ligase from Thermomicrobium roseum (strain ATCC 27502 / DSM 5159 / P-2).